We begin with the raw amino-acid sequence, 317 residues long: MPMQGAQRKLLGSLNSTPTATSNLGLAANHTGAPCLEVSIPDGLFLSLGLVSLVENVLVVAAIAKNRNLHSSMYCFICCLALSDLLVSGSNMLETAVILLLEAGALATRTSAVQRLHNTIDVLTCSSMLCSLCFLGAIAVDRYISIFYALRYHSIVTLPRTQRVIAAIWVASVLSSTLFITYYDHAAVLLCLVVFFLAMLVLMAVLYVHMLARACQHAHGIIRLHKRQSPAHQGFGLRGAATLTILLGIFFLCWGPFFLHLTLVVFCPQHLTCSCIFKNFKVFLTLIICNTIIDPLIYAFRSQELRRTLKEVLLCSW.

The Extracellular portion of the chain corresponds to 1–37 (MPMQGAQRKLLGSLNSTPTATSNLGLAANHTGAPCLE). Asparagine 29 is a glycosylation site (N-linked (GlcNAc...) asparagine). The chain crosses the membrane as a helical span at residues 38-63 (VSIPDGLFLSLGLVSLVENVLVVAAI). Over 64 to 72 (AKNRNLHSS) the chain is Cytoplasmic. Residues 73 to 93 (MYCFICCLALSDLLVSGSNML) traverse the membrane as a helical segment. The Extracellular portion of the chain corresponds to 94–118 (ETAVILLLEAGALATRTSAVQRLHN). Residues 119–140 (TIDVLTCSSMLCSLCFLGAIAV) form a helical membrane-spanning segment. Over 141 to 163 (DRYISIFYALRYHSIVTLPRTQR) the chain is Cytoplasmic. The chain crosses the membrane as a helical span at residues 164-183 (VIAAIWVASVLSSTLFITYY). The Extracellular segment spans residues 184–191 (DHAAVLLC). Residues 192 to 211 (LVVFFLAMLVLMAVLYVHML) form a helical membrane-spanning segment. At 212-240 (ARACQHAHGIIRLHKRQSPAHQGFGLRGA) the chain is on the cytoplasmic side. A helical membrane pass occupies residues 241–266 (ATLTILLGIFFLCWGPFFLHLTLVVF). Residues 267-279 (CPQHLTCSCIFKN) are Extracellular-facing. Residues 280–300 (FKVFLTLIICNTIIDPLIYAF) form a helical membrane-spanning segment. At 301 to 317 (RSQELRRTLKEVLLCSW) the chain is on the cytoplasmic side. Cysteine 315 carries S-palmitoyl cysteine lipidation.

This sequence belongs to the G-protein coupled receptor 1 family. As to quaternary structure, interacts with MGRN1, but does not undergo MGRN1-mediated ubiquitination; this interaction competes with GNAS-binding and thus inhibits agonist-induced cAMP production. Interacts with OPN3; the interaction results in a decrease in MC1R-mediated cAMP signaling and ultimately a decrease in melanin production in melanocytes.

The protein localises to the cell membrane. Its function is as follows. Receptor for MSH (alpha, beta and gamma) and ACTH. The activity of this receptor is mediated by G proteins which activate adenylate cyclase. Mediates melanogenesis, the production of eumelanin (black/brown) and phaeomelanin (red/yellow), via regulation of cAMP signaling in melanocytes. This is Melanocyte-stimulating hormone receptor (MC1R) from Saguinus imperator (Emperor tamarin).